Consider the following 214-residue polypeptide: Guanylate kinase (214 aa).

Residues 12 to 191 (GLMLVMSSPS…SIAAVQAILA (180 aa)) enclose the Guanylate kinase-like domain. 19–26 (SPSGAGKT) serves as a coordination point for ATP.

It belongs to the guanylate kinase family.

The protein localises to the cytoplasm. It carries out the reaction GMP + ATP = GDP + ADP. Essential for recycling GMP and indirectly, cGMP. The chain is Guanylate kinase from Paramagnetospirillum magneticum (strain ATCC 700264 / AMB-1) (Magnetospirillum magneticum).